Reading from the N-terminus, the 100-residue chain is Eukaryotic translation initiation factor 4E-binding protein 3 (100 aa).

The YXXXXLphi motif signature appears at 40–46 (YDRKFLL). A disordered region spans residues 81–100 (LKEQETEEEIPDDAQFEMDI). Positions 85 to 100 (ETEEEIPDDAQFEMDI) are enriched in acidic residues. Positions 96–100 (FEMDI) match the TOS motif motif.

It belongs to the eIF4E-binding protein family. Interacts with EIF4E. Interacts with RPA2 (in unphosphorylated form via N-terminus); the interaction enhances EIF4EBP3-mediated inhibition of EIF4E-mediated mRNA nuclear export. In terms of processing, phosphorylated. As to expression, expression is highest in skeletal muscle, heart, kidney, and pancreas, whereas there is very little expression in brain and thymus.

The protein localises to the cytoplasm. The protein resides in the nucleus. Its function is as follows. Repressor of translation initiation that regulates EIF4E activity by preventing its assembly into the eIF4F complex: the hypophosphorylated form competes with EIF4G1/EIF4G3 and strongly binds to EIF4E, leading to repression of translation. In contrast, the hyperphosphorylated form dissociates from EIF4E, allowing interaction between EIF4G1/EIF4G3 and EIF4E, leading to initiation of translation. Inhibits EIF4E-mediated mRNA nuclear export. In Homo sapiens (Human), this protein is Eukaryotic translation initiation factor 4E-binding protein 3 (EIF4EBP3).